Reading from the N-terminus, the 257-residue chain is Ribonuclease HII (257 aa).

Residues 72 to 257 form the RNase H type-2 domain; the sequence is TYIAGIDEVG…FAPIKDMIQK (186 aa). Positions 78, 79, and 170 each coordinate a divalent metal cation.

This sequence belongs to the RNase HII family. Mn(2+) is required as a cofactor. Requires Mg(2+) as cofactor.

The protein resides in the cytoplasm. It catalyses the reaction Endonucleolytic cleavage to 5'-phosphomonoester.. Its function is as follows. Endonuclease that specifically degrades the RNA of RNA-DNA hybrids. The chain is Ribonuclease HII from Bacillus mycoides (strain KBAB4) (Bacillus weihenstephanensis).